The sequence spans 68 residues: Alpha-conotoxin-like Mr1.2 (68 aa).

An N-terminal signal peptide occupies residues 1 to 21; that stretch reads MGMRMMFTVFLLVVLATTVVS. A propeptide spanning residues 22–48 is cleaved from the precursor; the sequence is FTSDRGSDGRNAAAKDKASDLVALTVK. Disulfide bonds link C50-C56 and C51-C64. The segment at 52 to 54 is ser-Xaa-Pro motif, crucial for potent interaction with nAChR; the sequence is SNP. N65 bears the Asparagine amide mark.

The protein belongs to the conotoxin A superfamily. Expressed by the venom duct.

The protein localises to the secreted. Its function is as follows. Alpha-conotoxins act on postsynaptic membranes, they bind to the nicotinic acetylcholine receptors (nAChR) and thus inhibit them. The chain is Alpha-conotoxin-like Mr1.2 from Conus marmoreus (Marble cone).